A 160-amino-acid polypeptide reads, in one-letter code: Arginine repressor (160 aa).

Belongs to the ArgR family.

It is found in the cytoplasm. The protein operates within amino-acid biosynthesis; L-arginine biosynthesis [regulation]. Regulates arginine biosynthesis genes. This Anaeromyxobacter sp. (strain K) protein is Arginine repressor.